A 519-amino-acid chain; its full sequence is Chromobox protein homolog 2 (519 aa).

Residues 12 to 70 (FAAECILSKRLRKGKLEYLVKWRGWSSKHNSWEPEENILDPRLLLAFQKKEHEKEVQNR) enclose the Chromo domain. The span at 60–69 (KKEHEKEVQN) shows a compositional bias: basic and acidic residues. A disordered region spans residues 60–180 (KKEHEKEVQN…PPEQKAARRP (121 aa)). Residues 70–84 (RKRGKRPRGRPRKHT) show a composition bias toward basic residues. Positions 75–87 (RPRGRPRKHTVTS) form a DNA-binding region, a.T hook. Residues 103 to 119 (KSKSSSSSSSSTSSSSS) are compositionally biased toward low complexity. The segment covering 129–141 (LDSKRGPRGRETH) has biased composition (basic and acidic residues). Residues K147 and K154 each participate in a glycyl lysine isopeptide (Lys-Gly) (interchain with G-Cter in SUMO2) cross-link. Residues 164–169 (KRGRKP) carry the Nuclear localization signal motif. At R248 the chain carries Asymmetric dimethylarginine; alternate. At R248 the chain carries Omega-N-methylarginine; alternate. Disordered regions lie at residues 295-336 (QKGG…LAPT) and 367-464 (AIPA…TSLP). S303 is modified (phosphoserine). Polar residues-rich tracts occupy residues 321–336 (QRGNHSGSPGAQLAPT) and 384–395 (TGANMTNAPTDN). Low complexity predominate over residues 453-464 (SSDSDPDSTSLP).

In terms of assembly, component of a PRC1-like complex. The composition of the PRC1 complex may differ between the PRC1 complex in pluripotent embryonic stem cells containing RNF2, CBX7 and PCGF2, and the PRC1 complex in differentiating cells containing RNF2, CBX2, CBX4 and BMI1. Interacts with RING1/RNF2. Interacts (via chromodomain) with histone H3K9Me3 and H3K27me3. May interact with H3C15 and H3C1. Expressed in embryoid bodies.

It is found in the nucleus speckle. It localises to the chromosome. Component of a Polycomb group (PcG) multiprotein PRC1-like complex, a complex class required to maintain the transcriptionally repressive state of many genes, including Hox genes, throughout development. PcG PRC1 complex acts via chromatin remodeling and modification of histones; it mediates monoubiquitination of histone H2A 'Lys-119', rendering chromatin heritably changed in its expressibility. Binds to histone H3 trimethylated at 'Lys-9' (H3K9me3) or at 'Lys-27' (H3K27me3). Plays a role in the lineage differentiation of the germ layers in embryonic development. Involved in sexual development, acting as activator of NR5A1 expression. The chain is Chromobox protein homolog 2 (Cbx2) from Mus musculus (Mouse).